A 607-amino-acid polypeptide reads, in one-letter code: Rap1 GTPase-GDP dissociation stimulator 1-A (607 aa).

ARM repeat units lie at residues 79-118 (ELMRIPCVEAGLIPPLVQLLHSKDQEVLLQTGRALGNICY), 170-211 (DSLQ…NLAE), 347-390 (DGNC…NLAI), 391-431 (PVVN…MLID), and 479-519 (SKDV…LIAA).

As to quaternary structure, interacts with ralB. Probably interacts with the post-translationally isoprenylated (geranyl-geranylation) forms of ral proteins. Interacts with both GDP-bound and GTP-bound forms of ralA, but interaction is much stronger with ralA-GDP. As to expression, weakly expressed in adult tissues with highest levels found in spleen, kidney, skin and A6 cells.

Its subcellular location is the cytoplasm. It is found in the cytosol. The protein resides in the endoplasmic reticulum. It localises to the mitochondrion. Stimulates GDP/GTP exchange reaction of a group of small GTP-binding proteins (G proteins) including Rap1a/Rap1b, RhoA, RhoB and KRas, by stimulating the dissociation of GDP from and the subsequent binding of GTP to each small G protein. The polypeptide is Rap1 GTPase-GDP dissociation stimulator 1-A (rap1gds1-a) (Xenopus laevis (African clawed frog)).